The chain runs to 87 residues: uncharacterized protein (87 aa).

This sequence to bacteriophage lambda exonuclease exo.

This is an uncharacterized protein from Escherichia coli (strain K12).